A 585-amino-acid polypeptide reads, in one-letter code: MALASGVTFAGYTVVRMLGCSAMGEVYLVQHPGFPGWQALKVLSPAMAADDEFRRRFQRETEVAARLFHPHILEVHDRGEFDGQLWIAMDYVDGIDATQHMADRFPAVLPVGEVLAIVTAVAGALDYAHQRGLLHRDVNPANVVLTSQSAGDQRILLADFGIASQPSYPAPELSAGADVDGRADQYALALTAIHLFAGAPPVDRSHTGPLQPPKLSAFRPDLARLDGVLSRALATAPADRFGSCREFADAMNEQAGVAIADQSSGGVDASEVTAAAGEEAYVVDYPAYGWPEAVDCKEPSARAPAPAAPTPQRRGSMLQSAAGVLARRLDNFSTATKAPASPTRRRPRRILVGAVAVLLLAGLFAVGIVIGRKTNTTATEVARPPTSGSAVPSAPTTTVAVTAPVPLDGTYRIEIQRSKQTYDYTPTPQPPDVNTWWAFRTSCTPTECLAAATMLDDNDHTQAKTPPVRPFLMQFGEGQWKSRPETVQFPCVGPNGSPSTQATTQLLALRPQPQGDLVGEMVVTVHSNECGQQGAVIRIPAVASRSGDLPPAVTVPDPATIPDTPDTTSTATLTPPTTTAPGPGR.

Residues 1–349 (MALASGVTFA…ASPTRRRPRR (349 aa)) lie on the Cytoplasmic side of the membrane. Positions 12-252 (YTVVRMLGCS…SCREFADAMN (241 aa)) constitute a Protein kinase domain. Residues 18-26 (LGCSAMGEV) and K41 contribute to the ATP site. K41, D90, and V92 together coordinate ADP. D137 serves as the catalytic Proton acceptor. A helical transmembrane segment spans residues 350–370 (ILVGAVAVLLLAGLFAVGIVI). Residues 371–585 (GRKTNTTATE…PTTTAPGPGR (215 aa)) lie on the Extracellular side of the membrane. The disordered stretch occupies residues 546–585 (SGDLPPAVTVPDPATIPDTPDTTSTATLTPPTTTAPGPGR). A compositionally biased stretch (low complexity) spans 554–585 (TVPDPATIPDTPDTTSTATLTPPTTTAPGPGR).

Belongs to the protein kinase superfamily. Ser/Thr protein kinase family. Mn(2+) serves as cofactor. In terms of processing, autophosphorylated at serine and threonine residues.

The protein resides in the cytoplasm. It localises to the cell membrane. It carries out the reaction L-seryl-[protein] + ATP = O-phospho-L-seryl-[protein] + ADP + H(+). It catalyses the reaction L-threonyl-[protein] + ATP = O-phospho-L-threonyl-[protein] + ADP + H(+). Functionally, plays an important role in slowing down the growth of mycobacteria within the infected host. The chain is Serine/threonine-protein kinase PknI (pknI) from Mycobacterium bovis (strain ATCC BAA-935 / AF2122/97).